The primary structure comprises 403 residues: L-alanine/L-glutamate racemase (403 aa).

Pyridoxal 5'-phosphate is bound by residues 62–64, 92–93, and 209–211; these read YSN, GL, and AVT. Lys-212 is modified (N6-(pyridoxal phosphate)lysine).

It belongs to the trans-sulfuration enzymes family. In terms of assembly, homotetramer; dimer of active dimers. Pyridoxal 5'-phosphate is required as a cofactor.

It carries out the reaction L-alanine = D-alanine. The enzyme catalyses L-glutamate = D-glutamate. It catalyses the reaction L,L-cystathionine + H2O = L-homocysteine + pyruvate + NH4(+). It participates in cell wall biogenesis; peptidoglycan biosynthesis. In terms of biological role, catalyzes the racemization of L-alanine to D-alanine, and of L-glutamate to D-glutamate. The activity is low, but likely physiological since W.pipientis wMel lacks canonical alr and murI genes, while D-alanine and D-glutamate are essential components of peptidoglycan. Also displays a vestigial cystathionine beta-lyase (CBL) activity, cleaving cystathionine to homocysteine and pyruvate; however, this reaction seems not to be physiologically relevant since the only met gene in the genome of this obligately intracellular parasitic bacterium is metC, demonstrating that it is a methionine auxotroph. This chain is L-alanine/L-glutamate racemase, found in Wolbachia pipientis wMel.